Reading from the N-terminus, the 616-residue chain is Dihydroxy-acid dehydratase (616 aa).

A Mg(2+)-binding site is contributed by Asp-81. Residue Cys-122 participates in [2Fe-2S] cluster binding. The Mg(2+) site is built by Asp-123 and Lys-124. Lys-124 is modified (N6-carboxylysine). [2Fe-2S] cluster is bound at residue Cys-195. Glu-491 contributes to the Mg(2+) binding site. Ser-517 acts as the Proton acceptor in catalysis.

It belongs to the IlvD/Edd family. As to quaternary structure, homodimer. The cofactor is [2Fe-2S] cluster. Mg(2+) serves as cofactor.

It catalyses the reaction (2R)-2,3-dihydroxy-3-methylbutanoate = 3-methyl-2-oxobutanoate + H2O. It carries out the reaction (2R,3R)-2,3-dihydroxy-3-methylpentanoate = (S)-3-methyl-2-oxopentanoate + H2O. It participates in amino-acid biosynthesis; L-isoleucine biosynthesis; L-isoleucine from 2-oxobutanoate: step 3/4. The protein operates within amino-acid biosynthesis; L-valine biosynthesis; L-valine from pyruvate: step 3/4. In terms of biological role, functions in the biosynthesis of branched-chain amino acids. Catalyzes the dehydration of (2R,3R)-2,3-dihydroxy-3-methylpentanoate (2,3-dihydroxy-3-methylvalerate) into 2-oxo-3-methylpentanoate (2-oxo-3-methylvalerate) and of (2R)-2,3-dihydroxy-3-methylbutanoate (2,3-dihydroxyisovalerate) into 2-oxo-3-methylbutanoate (2-oxoisovalerate), the penultimate precursor to L-isoleucine and L-valine, respectively. This Shewanella loihica (strain ATCC BAA-1088 / PV-4) protein is Dihydroxy-acid dehydratase.